The sequence spans 488 residues: IQ domain-containing protein IQM1 (488 aa).

The tract at residues 20-46 is disordered; sequence RTNSFKRDDTNRHQNSPKSTMERSLSF. The span at 32–46 shows a compositional bias: polar residues; it reads HQNSPKSTMERSLSF. An IQ domain is found at 106-135; it reads LDAAATTLQKVYKSYRTRRNLADCAVVVEE. Disordered stretches follow at residues 377 to 403 and 448 to 472; these read SFKS…EKEE and SPRV…VRVS. Basic and acidic residues predominate over residues 388 to 403; the sequence is RKEVSEEVEIPSEKEE.

In terms of assembly, interacts (via IQ domain) with CAM5. Highly expressed in leaf mesophyll cells. Expressed in roots, rosette and cauline leaves, stems, flowers and siliques.

It localises to the cytoplasm. Its subcellular location is the nucleus. Involved in the modulation of stomatal movement. Promotes stomatal opening. May play a role in the regulation of chitin signaling. May be involved in biotic and abiotic stress responses. In Arabidopsis thaliana (Mouse-ear cress), this protein is IQ domain-containing protein IQM1.